Consider the following 779-residue polypeptide: Mesenchyme-specific cell surface glycoprotein (779 aa).

A signal peptide spans 1–15; sequence MQFGVPLLVLCLALG. N-linked (GlcNAc...) asparagine glycosylation is found at Asn203 and Asn234. The disordered stretch occupies residues 249–363; that stretch reads AGFPRGTTWS…QYPMIPTTPL (115 aa). The segment covering 262-351 has biased composition (gly residues); that stretch reads GAGGQGGQGQ…GGQGGQGGGN (90 aa). 3 N-linked (GlcNAc...) asparagine glycosylation sites follow: Asn369, Asn451, and Asn609.

As to expression, restricted to the primary mesenchyme cell lineage.

The protein localises to the cell membrane. Its function is as follows. Not known. Could be involved in mesenchyme cell migration, adhesion, fusion, or spicule formation. The chain is Mesenchyme-specific cell surface glycoprotein from Strongylocentrotus purpuratus (Purple sea urchin).